Here is a 692-residue protein sequence, read N- to C-terminus: Methionine--tRNA ligase (692 aa).

The 'HIGH' region signature appears at 12–22 (PYANGSFHIGH). Cysteine 143, cysteine 146, cysteine 156, and cysteine 159 together coordinate Zn(2+). The 'KMSKS' region motif lies at 341–345 (KMSKS). Lysine 344 lines the ATP pocket. One can recognise a tRNA-binding domain in the interval 586–692 (DFAKIDLRIA…PGAQPGMRVR (107 aa)).

This sequence belongs to the class-I aminoacyl-tRNA synthetase family. MetG type 1 subfamily. In terms of assembly, homodimer. Zn(2+) serves as cofactor.

It is found in the cytoplasm. It carries out the reaction tRNA(Met) + L-methionine + ATP = L-methionyl-tRNA(Met) + AMP + diphosphate. In terms of biological role, is required not only for elongation of protein synthesis but also for the initiation of all mRNA translation through initiator tRNA(fMet) aminoacylation. This is Methionine--tRNA ligase from Bordetella bronchiseptica (strain ATCC BAA-588 / NCTC 13252 / RB50) (Alcaligenes bronchisepticus).